Here is a 278-residue protein sequence, read N- to C-terminus: Dermonecrotic toxin LhSicTox-alphaIV1ii (278 aa).

His5 is a catalytic residue. Mg(2+)-binding residues include Glu25 and Asp27. Catalysis depends on His41, which acts as the Nucleophile. Intrachain disulfides connect Cys45-Cys51 and Cys47-Cys192. Asp85 provides a ligand contact to Mg(2+).

The protein belongs to the arthropod phospholipase D family. Class II subfamily. Requires Mg(2+) as cofactor. In terms of tissue distribution, expressed by the venom gland.

It localises to the secreted. It carries out the reaction an N-(acyl)-sphingosylphosphocholine = an N-(acyl)-sphingosyl-1,3-cyclic phosphate + choline. It catalyses the reaction an N-(acyl)-sphingosylphosphoethanolamine = an N-(acyl)-sphingosyl-1,3-cyclic phosphate + ethanolamine. The catalysed reaction is a 1-acyl-sn-glycero-3-phosphocholine = a 1-acyl-sn-glycero-2,3-cyclic phosphate + choline. The enzyme catalyses a 1-acyl-sn-glycero-3-phosphoethanolamine = a 1-acyl-sn-glycero-2,3-cyclic phosphate + ethanolamine. Dermonecrotic toxins cleave the phosphodiester linkage between the phosphate and headgroup of certain phospholipids (sphingolipid and lysolipid substrates), forming an alcohol (often choline) and a cyclic phosphate. This toxin acts on sphingomyelin (SM). It may also act on ceramide phosphoethanolamine (CPE), lysophosphatidylcholine (LPC) and lysophosphatidylethanolamine (LPE), but not on lysophosphatidylserine (LPS), and lysophosphatidylglycerol (LPG). It acts by transphosphatidylation, releasing exclusively cyclic phosphate products as second products. Induces dermonecrosis, hemolysis, increased vascular permeability, edema, inflammatory response, and platelet aggregation. The polypeptide is Dermonecrotic toxin LhSicTox-alphaIV1ii (Loxosceles hirsuta (Recluse spider)).